The following is a 177-amino-acid chain: Protein GrpE (177 aa).

It belongs to the GrpE family. As to quaternary structure, homodimer.

It localises to the cytoplasm. Participates actively in the response to hyperosmotic and heat shock by preventing the aggregation of stress-denatured proteins, in association with DnaK and GrpE. It is the nucleotide exchange factor for DnaK and may function as a thermosensor. Unfolded proteins bind initially to DnaJ; upon interaction with the DnaJ-bound protein, DnaK hydrolyzes its bound ATP, resulting in the formation of a stable complex. GrpE releases ADP from DnaK; ATP binding to DnaK triggers the release of the substrate protein, thus completing the reaction cycle. Several rounds of ATP-dependent interactions between DnaJ, DnaK and GrpE are required for fully efficient folding. The chain is Protein GrpE from Thermus thermophilus (strain ATCC BAA-163 / DSM 7039 / HB27).